A 294-amino-acid polypeptide reads, in one-letter code: NAD kinase (294 aa).

Catalysis depends on aspartate 74, which acts as the Proton acceptor. NAD(+) contacts are provided by residues 74–75 (DG), arginine 79, 149–150 (NE), aspartate 179, 190–195 (TGYSLS), and alanine 214.

Belongs to the NAD kinase family. A divalent metal cation serves as cofactor.

It localises to the cytoplasm. The enzyme catalyses NAD(+) + ATP = ADP + NADP(+) + H(+). Involved in the regulation of the intracellular balance of NAD and NADP, and is a key enzyme in the biosynthesis of NADP. Catalyzes specifically the phosphorylation on 2'-hydroxyl of the adenosine moiety of NAD to yield NADP. This Flavobacterium johnsoniae (strain ATCC 17061 / DSM 2064 / JCM 8514 / BCRC 14874 / CCUG 350202 / NBRC 14942 / NCIMB 11054 / UW101) (Cytophaga johnsonae) protein is NAD kinase.